The primary structure comprises 166 residues: Small ribosomal subunit protein uS5 (166 aa).

The region spanning 11–74 (LVEKLVAVDR…EAARRNMITV (64 aa)) is the S5 DRBM domain.

The protein belongs to the universal ribosomal protein uS5 family. Part of the 30S ribosomal subunit. Contacts proteins S4 and S8.

In terms of biological role, with S4 and S12 plays an important role in translational accuracy. Functionally, located at the back of the 30S subunit body where it stabilizes the conformation of the head with respect to the body. This chain is Small ribosomal subunit protein uS5, found in Acinetobacter baumannii (strain ATCC 17978 / DSM 105126 / CIP 53.77 / LMG 1025 / NCDC KC755 / 5377).